A 626-amino-acid polypeptide reads, in one-letter code: NAD-dependent malic enzyme, mitochondrial (626 aa).

The N-terminal 34 residues, 1-34 (MAIFSNQMRLSSTLLKRLHQRVAAAVNSSSSRNF), are a transit peptide targeting the mitochondrion. Residues R91 and R125 each coordinate fumarate. The Proton donor role is filled by Y146. R199 is a binding site for (S)-malate. R199 provides a ligand contact to NAD(+). The active-site Proton acceptor is the K217. A divalent metal cation contacts are provided by E288, D289, and D312. A348 and A351 together coordinate NAD(+). (S)-malate contacts are provided by N467 and N512.

This sequence belongs to the malic enzymes family. In terms of assembly, heterodimer of two related subunits. Mg(2+) serves as cofactor. It depends on Mn(2+) as a cofactor.

The protein resides in the mitochondrion matrix. The catalysed reaction is (S)-malate + NAD(+) = pyruvate + CO2 + NADH. This Solanum tuberosum (Potato) protein is NAD-dependent malic enzyme, mitochondrial.